Here is a 444-residue protein sequence, read N- to C-terminus: MHPHDQTIFALSSGRLPSAIAIVRLSGPHAGAALQMLAGKMPAPRLVTRALLRDPQGEPIDDAVVLWFPAPASATGENVVELHIHGSRAVIATLFGVLSETPELRPAEPGEFTRRAFENGKLDLTEAEGLDDLIHADTDRQRRQALRQLKGLLGDKVRRWREQIIEAAALIEAGIDFSDEGDVPAELLAPALSRVQQLLLEIEAVLAAQGRAERLRDGLTVVIAGPPNAGKSTLMNQLARREVAIVSPQAGTTRDLIEVQLDLDGYPVTVIDTAGIRETDDPVEQEGVRRARDRAAHADLVLWLSEHDGAEVERQGETPLWLVRTKTDLDGAERATRPDTKASRTFGISARSGAGMGALLDALVGFARNFFGSTESGLITRERQRQSLRQTADALQRSLDTVDLGEELVAEELRIAALALGRLLGRVDVEDLLDVIFREFCIGK.

Residues R24, E81, and K121 each contribute to the (6S)-5-formyl-5,6,7,8-tetrahydrofolate site. The TrmE-type G domain maps to 218–368 (GLTVVIAGPP…LLDALVGFAR (151 aa)). Residues 228–233 (NAGKST), 247–253 (SPQAGTT), 272–275 (DTAG), and 349–351 (SAR) contribute to the GTP site. Mg(2+) contacts are provided by S232 and T253. (6S)-5-formyl-5,6,7,8-tetrahydrofolate is bound at residue K444.

Belongs to the TRAFAC class TrmE-Era-EngA-EngB-Septin-like GTPase superfamily. TrmE GTPase family. In terms of assembly, homodimer. Heterotetramer of two MnmE and two MnmG subunits. It depends on K(+) as a cofactor.

The protein localises to the cytoplasm. In terms of biological role, exhibits a very high intrinsic GTPase hydrolysis rate. Involved in the addition of a carboxymethylaminomethyl (cmnm) group at the wobble position (U34) of certain tRNAs, forming tRNA-cmnm(5)s(2)U34. In Bradyrhizobium sp. (strain ORS 278), this protein is tRNA modification GTPase MnmE.